The primary structure comprises 292 residues: Ribosomal RNA small subunit methyltransferase A (292 aa).

S-adenosyl-L-methionine contacts are provided by Asn-28, Leu-30, Gly-55, Glu-76, Asp-101, and Asn-126.

It belongs to the class I-like SAM-binding methyltransferase superfamily. rRNA adenine N(6)-methyltransferase family. RsmA subfamily.

It is found in the cytoplasm. It carries out the reaction adenosine(1518)/adenosine(1519) in 16S rRNA + 4 S-adenosyl-L-methionine = N(6)-dimethyladenosine(1518)/N(6)-dimethyladenosine(1519) in 16S rRNA + 4 S-adenosyl-L-homocysteine + 4 H(+). Functionally, specifically dimethylates two adjacent adenosines (A1518 and A1519) in the loop of a conserved hairpin near the 3'-end of 16S rRNA in the 30S particle. May play a critical role in biogenesis of 30S subunits. This is Ribosomal RNA small subunit methyltransferase A from Bacillus thuringiensis (strain Al Hakam).